The primary structure comprises 107 residues: Thiosulfate sulfurtransferase GlpE (107 aa).

The Rhodanese domain maps to 19–107 (QDLNAVLVDI…WHKAGLPVEK (89 aa)). The active-site Cysteine persulfide intermediate is cysteine 67.

It belongs to the GlpE family.

It is found in the cytoplasm. The enzyme catalyses thiosulfate + hydrogen cyanide = thiocyanate + sulfite + 2 H(+). It carries out the reaction thiosulfate + [thioredoxin]-dithiol = [thioredoxin]-disulfide + hydrogen sulfide + sulfite + 2 H(+). In terms of biological role, transferase that catalyzes the transfer of sulfur from thiosulfate to thiophilic acceptors such as cyanide or dithiols. May function in a CysM-independent thiosulfate assimilation pathway by catalyzing the conversion of thiosulfate to sulfite, which can then be used for L-cysteine biosynthesis. This chain is Thiosulfate sulfurtransferase GlpE, found in Aliivibrio fischeri (strain MJ11) (Vibrio fischeri).